The sequence spans 739 residues: Nuclear pore complex protein NUP62 (739 aa).

Repeat copies occupy residues 6 to 7, 17 to 18, 50 to 51, 52 to 53, 68 to 69, 70 to 71, 78 to 79, 80 to 81, 91 to 92, 93 to 94, 108 to 109, 110 to 111, 124 to 125, 141 to 142, 159 to 160, 174 to 175, 186 to 187, 207 to 208, and 221 to 222. The tract at residues 6 to 450 is 26 X 2 AA repeats of F-G; it reads FGQSNSVGGF…AATFSTTGFG (445 aa). Residues 18-67 are disordered; sequence GSSSATNSSSASSTTSPLSFSFNQSSNPSSTGFGFGSSVSSTPASSTTPS. Residues 79-218 show a composition bias toward low complexity; sequence GFGSSASSST…ASSSAATSTS (140 aa). The segment at 79–245 is disordered; that stretch reads GFGSSASSST…VASSAPGSSS (167 aa). The span at 232–245 shows a compositional bias: low complexity; the sequence is PSFSVASSAPGSSS. A run of 5 repeats spans residues 248–249, 271–272, 280–281, 308–309, and 366–367. Disordered regions lie at residues 281–329, 341–366, and 399–418; these read GSSS…ASPF, TASS…SFSF, and TTTS…SAPA. Repeat copies occupy residues 426 to 427 and 449 to 450. A disordered region spans residues 471 to 533; the sequence is KTSTPASSSQ…AVAPVAGSPK (63 aa). Positions 472 to 519 are enriched in low complexity; that stretch reads TSTPASSSQPQTTSPAFSFSLPSSTSTTAPATSSATTTQTTLVVPSSS. Residues 584–674 adopt a coiled-coil conformation; the sequence is RLEIEVAKVV…IRSIIQSVNA (91 aa).

The protein belongs to the nucleoporin NSP1/NUP62 family. Part of the nuclear pore complex (NPC). The NPC has an eight-fold symmetrical structure comprising a central transport channel and two rings, the cytoplasmic and nuclear rings, to which eight filaments are attached. The cytoplasmic filaments have loose ends, while the nuclear filaments are joined in a distal ring, forming a nuclear basket. NPCs are highly dynamic in configuration and composition, and can be devided in 3 subcomplexes, the NUP62 subcomplex, the NUP107-160 subcomplex and the NUP93 subcomplex, containing approximately 30 different nucleoporin proteins. Interacts with NUP58 and the importin KPNB1.

It is found in the nucleus envelope. It localises to the nucleus. Its subcellular location is the nuclear pore complex. The chain is Nuclear pore complex protein NUP62 from Arabidopsis thaliana (Mouse-ear cress).